Reading from the N-terminus, the 30-residue chain is Neurotoxin II.22.5 (30 aa).

Residues 1–30 (KEGYIVNYHTGCKYTCAKLGDNDYCLRECK) form the LCN-type CS-alpha/beta domain.

Belongs to the long (4 C-C) scorpion toxin superfamily. Sodium channel inhibitor family. Beta subfamily. As to expression, expressed by the venom gland.

The protein localises to the secreted. In terms of biological role, binds to sodium channels (Nav) and inhibits the inactivation of the activated channels, thereby blocking neuronal transmission. This is Neurotoxin II.22.5 from Centruroides tecomanus (Scorpion).